Here is a 176-residue protein sequence, read N- to C-terminus: Large ribosomal subunit protein bL28m (176 aa).

Residues 1–8 (MASKLLRK) constitute a mitochondrion transit peptide.

It belongs to the bacterial ribosomal protein bL28 family. As to quaternary structure, component of the mitochondrial large ribosomal subunit (mt-LSU). Mature yeast 74S mitochondrial ribosomes consist of a small (37S) and a large (54S) subunit. The 37S small subunit contains a 15S ribosomal RNA (15S mt-rRNA) and at least 32 different proteins. The 54S large subunit contains a 21S rRNA (21S mt-rRNA) and at least 45 different proteins.

The protein resides in the cytoplasm. It is found in the mitochondrion. Component of the mitochondrial ribosome (mitoribosome), a dedicated translation machinery responsible for the synthesis of mitochondrial genome-encoded proteins, including at least some of the essential transmembrane subunits of the mitochondrial respiratory chain. The mitoribosomes are attached to the mitochondrial inner membrane and translation products are cotranslationally integrated into the membrane. The polypeptide is Large ribosomal subunit protein bL28m (mrpl24) (Schizosaccharomyces pombe (strain 972 / ATCC 24843) (Fission yeast)).